We begin with the raw amino-acid sequence, 339 residues long: Protein FAM50A (339 aa).

The segment at 1–31 (MAQYKGAASEAGRAMHLMKKREKQREQMEQM) is disordered. The residue at position 2 (Ala2) is an N-acetylalanine. Lys100 is covalently cross-linked (Glycyl lysine isopeptide (Lys-Gly) (interchain with G-Cter in SUMO2)). A disordered region spans residues 150 to 177 (TTKKKKLGKNPDVDTSFLPDRDREEEEN). A Nuclear localization signal motif is present at residues 152-155 (KKKK). A compositionally biased stretch (basic and acidic residues) spans 168 to 177 (PDRDREEEEN).

Belongs to the FAM50 family. As to quaternary structure, interacts with EFTUD2, a component of the spliceosome U5 complex. Interacts with DDX41, a component of the spliceosome C complex. As to expression, widely expressed in embryonic and adult tissues.

The protein localises to the nucleus. Probably involved in the regulation of pre-mRNA splicing. This chain is Protein FAM50A (Fam50a), found in Mus musculus (Mouse).